Here is a 476-residue protein sequence, read N- to C-terminus: MNSAVEAELAELGIEGYLSQHQHKSMLRFLTCGSVDDGKSTLIGRLLHDTKQIYEDQLAAVHSDSQRVGTTGEKPDLALLVDGLQAEREQGITIDVAYRYFSTQKRKFIIADTPGHEQYTRNMATGASTCDLAVILIDARKGVLDQTRRHSFISNLLGLKHFIVAVNKMDLVDYSQDRFEEIRDQYLEFAENLEGETNIQILPVSALEGINVAAPSKELAWFEGPSLLEVLENVDIDQKRSAGEFRFPVQYVNRPNLDFRGFAGTVASGRVSVGDEIKALPSGKTSKVARIVTFDGDLESAQAGLAVTLTLEDEIDISRGDLIVLENAQIESTNHVLADIVWMTEQPLQPGKAYDIKIAGKKTVGQVETVRHQYDINNLSTHAVDELPLNGIGLCEWSLNETVALDKYRESADTGGFIVIDRLTNVTVGAGLIRDRLDSVEQQVGNFSAFELEFNALVRKHFPHWDAKDLSQLLKS.

A tr-type G domain is found at 24-239 (KSMLRFLTCG…VLENVDIDQK (216 aa)). The segment at 33–40 (GSVDDGKS) is G1. Residue 33–40 (GSVDDGKS) participates in GTP binding. A G2 region spans residues 91–95 (GITID). Residues 112-115 (DTPG) are G3. GTP is bound by residues 112–116 (DTPGH) and 167–170 (NKMD). Residues 167 to 170 (NKMD) form a G4 region. The interval 205–207 (SAL) is G5.

Belongs to the TRAFAC class translation factor GTPase superfamily. Classic translation factor GTPase family. CysN/NodQ subfamily. Heterodimer composed of CysD, the smaller subunit, and CysN.

The catalysed reaction is sulfate + ATP + H(+) = adenosine 5'-phosphosulfate + diphosphate. Its pathway is sulfur metabolism; hydrogen sulfide biosynthesis; sulfite from sulfate: step 1/3. In terms of biological role, with CysD forms the ATP sulfurylase (ATPS) that catalyzes the adenylation of sulfate producing adenosine 5'-phosphosulfate (APS) and diphosphate, the first enzymatic step in sulfur assimilation pathway. APS synthesis involves the formation of a high-energy phosphoric-sulfuric acid anhydride bond driven by GTP hydrolysis by CysN coupled to ATP hydrolysis by CysD. This chain is Sulfate adenylyltransferase subunit 1, found in Vibrio atlanticus (strain LGP32) (Vibrio splendidus (strain Mel32)).